We begin with the raw amino-acid sequence, 84 residues long: Small ribosomal subunit protein uS17 (84 aa).

This sequence belongs to the universal ribosomal protein uS17 family. Part of the 30S ribosomal subunit.

In terms of biological role, one of the primary rRNA binding proteins, it binds specifically to the 5'-end of 16S ribosomal RNA. The chain is Small ribosomal subunit protein uS17 from Borrelia duttonii (strain Ly).